A 350-amino-acid polypeptide reads, in one-letter code: 8-amino-7-oxononanoate synthase (350 aa).

77–78 contacts pyridoxal 5'-phosphate; the sequence is GY. Position 102 (His102) interacts with substrate. Pyridoxal 5'-phosphate-binding positions include Ser150, 175–178, and 204–207; these read DDAH and TLSK. An N6-(pyridoxal phosphate)lysine modification is found at Lys207. Residue Thr316 participates in substrate binding.

This sequence belongs to the class-II pyridoxal-phosphate-dependent aminotransferase family. BioF subfamily. As to quaternary structure, homodimer. Pyridoxal 5'-phosphate is required as a cofactor.

The catalysed reaction is 6-carboxyhexanoyl-[ACP] + L-alanine + H(+) = (8S)-8-amino-7-oxononanoate + holo-[ACP] + CO2. It functions in the pathway cofactor biosynthesis; biotin biosynthesis. Its function is as follows. Catalyzes the decarboxylative condensation of pimeloyl-[acyl-carrier protein] and L-alanine to produce 8-amino-7-oxononanoate (AON), [acyl-carrier protein], and carbon dioxide. This Methylocella silvestris (strain DSM 15510 / CIP 108128 / LMG 27833 / NCIMB 13906 / BL2) protein is 8-amino-7-oxononanoate synthase.